We begin with the raw amino-acid sequence, 438 residues long: uncharacterized protein (438 aa).

The next 12 helical transmembrane spans lie at 22 to 42, 59 to 79, 89 to 109, 137 to 157, 174 to 194, 237 to 257, 258 to 278, 292 to 312, 330 to 350, 356 to 376, 380 to 400, and 418 to 438; these read VSPI…GGFG, SAAL…AGLF, IVKG…MLIA, MVMA…TPWG, FFVP…FLAF, LIYL…LGTK, HPSV…YPNV, AITV…LSGT, MGGF…FVLS, FGMV…PVEI, SIMG…VLLV, and AVIT…ITIL.

This sequence belongs to the CitM (TC 2.A.11) transporter family.

Its subcellular location is the cell membrane. In terms of biological role, transports the free citrate anion. This is an uncharacterized protein from Bacillus subtilis (strain 168).